Consider the following 418-residue polypeptide: Trafficking protein particle complex subunit 13 (418 aa).

The protein belongs to the TRAPPC13 family. As to quaternary structure, part of the multisubunit TRAPP (transport protein particle) complex.

The chain is Trafficking protein particle complex subunit 13 (Trappc13) from Rattus norvegicus (Rat).